The chain runs to 85 residues: Cell division topological specificity factor (85 aa).

It belongs to the MinE family.

Its function is as follows. Prevents the cell division inhibition by proteins MinC and MinD at internal division sites while permitting inhibition at polar sites. This ensures cell division at the proper site by restricting the formation of a division septum at the midpoint of the long axis of the cell. This chain is Cell division topological specificity factor, found in Stutzerimonas stutzeri (strain A1501) (Pseudomonas stutzeri).